Consider the following 280-residue polypeptide: Eukaryotic translation initiation factor 3 subunit F-1 (280 aa).

The MPN domain maps to 8 to 138; that stretch reads VRVHPVVLFQ…LRAYVCIQLG (131 aa).

Belongs to the eIF-3 subunit F family. In terms of assembly, component of the eukaryotic translation initiation factor 3 (eIF-3) complex. The eIF-3 complex interacts with pix.

The protein resides in the cytoplasm. Component of the eukaryotic translation initiation factor 3 (eIF-3) complex, which is involved in protein synthesis of a specialized repertoire of mRNAs and, together with other initiation factors, stimulates binding of mRNA and methionyl-tRNAi to the 40S ribosome. The eIF-3 complex specifically targets and initiates translation of a subset of mRNAs involved in cell proliferation. The chain is Eukaryotic translation initiation factor 3 subunit F-1 from Drosophila virilis (Fruit fly).